Consider the following 323-residue polypeptide: Methenyltetrahydromethanopterin cyclohydrolase (323 aa).

It belongs to the MCH family.

The protein resides in the cytoplasm. The catalysed reaction is 5,10-methenyl-5,6,7,8-tetrahydromethanopterin + H2O = N(5)-formyl-5,6,7,8-tetrahydromethanopterin + H(+). Its pathway is one-carbon metabolism; methanogenesis from CO(2); 5,10-methenyl-5,6,7,8-tetrahydromethanopterin from CO(2): step 3/3. Catalyzes the reversible interconversion of 5-formyl-H(4)MPT to methenyl-H(4)MPT(+). The protein is Methenyltetrahydromethanopterin cyclohydrolase of Methanococcus maripaludis (strain DSM 14266 / JCM 13030 / NBRC 101832 / S2 / LL).